The primary structure comprises 31 residues: Phalloidin proprotein (31 aa).

Residues 1–10 (MSDINATRLP) constitute a propeptide that is removed on maturation. Positions 11 to 17 (AWLATCP) form a cross-link, cyclopeptide (Ala-Pro). Residues 12 to 16 (WLATC) constitute a cross-link (2'-cysteinyl-6'-hydroxytryptophan sulfoxide (Trp-Cys)). Residues 18–31 (CAGDDVNPLLTRGE) constitute a propeptide that is removed on maturation.

It belongs to the MSDIN fungal toxin family. Post-translationally, processed by the macrocyclase-peptidase enzyme POPB to yield a toxic cyclic heptapeptide. POPB first removes 10 residues from the N-terminus. Conformational trapping of the remaining peptide forces the enzyme to release this intermediate rather than proceed to macrocyclization. The enzyme rebinds the remaining peptide in a different conformation and catalyzes macrocyclization of the N-terminal 7 residues.

Major toxin that belongs to the bicyclic heptapeptides called phallotoxins. Although structurally related to amatoxins, phallotoxins have a different mode of action, which is the stabilization of F-actin. Phallotoxins are poisonous when administered parenterally, but not orally because of poor absorption. In Amanita ocreata (Western North American destroying angel), this protein is Phalloidin proprotein.